Reading from the N-terminus, the 332-residue chain is 4-hydroxyproline 2-epimerase 2 (332 aa).

Residue cysteine 89 is the Proton acceptor of the active site. Substrate contacts are provided by residues histidine 222, aspartate 248, and 253 to 254 (GT).

Belongs to the proline racemase family.

The enzyme catalyses trans-4-hydroxy-L-proline = cis-4-hydroxy-D-proline. In terms of biological role, catalyzes the epimerization of trans-4-hydroxy-L-proline (t4LHyp) to cis-4-hydroxy-D-proline (c4DHyp). Is likely involved in a degradation pathway that converts t4LHyp to alpha-ketoglutarate. Displays no proline racemase activity. This chain is 4-hydroxyproline 2-epimerase 2, found in Rhizobium rhizogenes (strain K84 / ATCC BAA-868) (Agrobacterium radiobacter).